Consider the following 148-residue polypeptide: Arginine repressor (148 aa).

It belongs to the ArgR family.

It is found in the cytoplasm. The protein operates within amino-acid biosynthesis; L-arginine biosynthesis [regulation]. Regulates arginine biosynthesis genes. This chain is Arginine repressor, found in Chlorobium chlorochromatii (strain CaD3).